Reading from the N-terminus, the 429-residue chain is Glutamate-1-semialdehyde 2,1-aminomutase (429 aa).

Lysine 265 is modified (N6-(pyridoxal phosphate)lysine).

It belongs to the class-III pyridoxal-phosphate-dependent aminotransferase family. HemL subfamily. Homodimer. It depends on pyridoxal 5'-phosphate as a cofactor.

It is found in the cytoplasm. It catalyses the reaction (S)-4-amino-5-oxopentanoate = 5-aminolevulinate. It functions in the pathway porphyrin-containing compound metabolism; protoporphyrin-IX biosynthesis; 5-aminolevulinate from L-glutamyl-tRNA(Glu): step 2/2. This chain is Glutamate-1-semialdehyde 2,1-aminomutase, found in Shewanella piezotolerans (strain WP3 / JCM 13877).